A 478-amino-acid polypeptide reads, in one-letter code: Putative sulfate transporter YbaR (478 aa).

The next 12 membrane-spanning stretches (helical) occupy residues 19–39 (ILAG…FSII), 42–62 (VDPM…SIFG), 65–85 (PGMI…LVAD), 87–107 (GLQY…ILGI), 121–141 (VMIG…LPQF), 143–163 (GASW…YVLP), 168–188 (AVPS…TFHV), 220–240 (IIFP…LLTA), 259–279 (GQGI…CAMI), 295–315 (SAFV…HVVV), 345–365 (APLT…VTDD), and 366–386 (LSKG…AKIS). One can recognise an STAS domain in the interval 389 to 478 (KIVSHAEDQK…ASKSLMKQMA (90 aa)).

Belongs to the SLC26A/SulP transporter (TC 2.A.53) family.

It is found in the cell membrane. In Bacillus subtilis (strain 168), this protein is Putative sulfate transporter YbaR (ybaR).